Reading from the N-terminus, the 344-residue chain is tRNA N6-adenosine threonylcarbamoyltransferase (344 aa).

The Fe cation site is built by His-110 and His-114. Residues 133-137 (VMSGA), Asp-166, Gly-179, and Asn-278 contribute to the substrate site. Asp-303 contacts Fe cation.

The protein belongs to the KAE1 / TsaD family. Fe(2+) serves as cofactor.

The protein resides in the cytoplasm. The enzyme catalyses L-threonylcarbamoyladenylate + adenosine(37) in tRNA = N(6)-L-threonylcarbamoyladenosine(37) in tRNA + AMP + H(+). In terms of biological role, required for the formation of a threonylcarbamoyl group on adenosine at position 37 (t(6)A37) in tRNAs that read codons beginning with adenine. Is involved in the transfer of the threonylcarbamoyl moiety of threonylcarbamoyl-AMP (TC-AMP) to the N6 group of A37, together with TsaE and TsaB. TsaD likely plays a direct catalytic role in this reaction. This chain is tRNA N6-adenosine threonylcarbamoyltransferase, found in Chlamydia felis (strain Fe/C-56) (Chlamydophila felis).